The chain runs to 335 residues: Probable geranylgeranyl transferase type-2 subunit beta (335 aa).

PFTB repeat units lie at residues 74–115, 122–163, 170–211, 218–259, and 266–312; these read TEEI…IIFN, ADTI…HLLG, IDSA…AIAG, RDRT…AILG, and SDAM…DDTL. Residues 196–198 and 238–250 each bind geranylgeranyl diphosphate; these read HSG and RPEK…YSWW. The Zn(2+) site is built by D244, C246, and H296.

It belongs to the protein prenyltransferase subunit beta family. As to quaternary structure, heterodimer of an alpha and a beta subunit. It depends on Zn(2+) as a cofactor.

The catalysed reaction is geranylgeranyl diphosphate + L-cysteinyl-[protein] = S-geranylgeranyl-L-cysteinyl-[protein] + diphosphate. Catalyzes the transfer of a geranyl-geranyl moiety from geranyl-geranyl pyrophosphate to both cysteines in Rab proteins with an -XXCC, -XCXC and -CCXX C-terminal. This chain is Probable geranylgeranyl transferase type-2 subunit beta (ggtb-1), found in Caenorhabditis elegans.